Consider the following 129-residue polypeptide: Profilin-4 (129 aa).

Belongs to the profilin family. Expressed in testis, in seminiferous tubules (at protein level). Expressed in spermatocytes and spermatids, but not in spermatogonium.

Its subcellular location is the cytoplasm. In terms of biological role, involved in male fertility. Required for manchette development and acrosome biogenesis during spermiogenesis. Binds in vitro to phospholipids, including phosphatidylinositol 3-phosphate (PtdIns(3)P), phosphatidylinositol 4,5-bisphosphate (PtdIns(4,5)P2), phosphatidylinositol 4-phosphate (PtdIns(4)P) and phosphatidic acid (PA). Contrary to other profilin family members, does not bind to actin in vitro. The protein is Profilin-4 (Pfn4) of Rattus norvegicus (Rat).